The following is a 104-amino-acid chain: Thioredoxin 1 (104 aa).

The region spanning 2–104 (VKIVTSQAEF…LKQLIEKYAA (103 aa)) is the Thioredoxin domain. Residues Cys30 and Cys33 each act as nucleophile in the active site. A disulfide bridge links Cys30 with Cys33.

This sequence belongs to the thioredoxin family. Post-translationally, the disulfide bond between Cys-30 and Cys-33 acts as a redox-active center and is reduced by thioredoxin reductase TRXR.

It localises to the cytoplasm. In terms of biological role, participates in various redox reactions through the reversible oxidation of its active center dithiol to a disulfide and catalyzes dithiol-disulfide exchange reactions. By modifying the redox status of targeted proteins, induces changes in their structure and activity. Reduces oxidized glutathione (GSSG), thereby acting as a backup for the glutathione redox system. Reduces nitroglutathione (GSNO), a compound involved in the transport of nitric oxide (NO). Also reduces oxidative stress by detoxifying hydrogen peroxide, tert-butyl hydroperoxide and cumene hydroperoxide. Activates ornithine aminotransferase OAT by reducing a disulfide bond in the substrate binding loop, thereby enhancing the affinity of OAT for its substrates. May reduce S-adenosyl-L-homocysteine hydrolase SAHH. This chain is Thioredoxin 1, found in Plasmodium falciparum (isolate 3D7).